The sequence spans 387 residues: Cysteine desulfurase (387 aa).

Residues 72–73, Asn-152, Gln-180, and 200–202 each bind pyridoxal 5'-phosphate; these read GT and SAH. Position 203 is an N6-(pyridoxal phosphate)lysine (Lys-203). Thr-238 lines the pyridoxal 5'-phosphate pocket. Cys-323 acts as the Cysteine persulfide intermediate in catalysis. Position 323 (Cys-323) interacts with [2Fe-2S] cluster.

It belongs to the class-V pyridoxal-phosphate-dependent aminotransferase family. NifS/IscS subfamily. In terms of assembly, homodimer. It depends on pyridoxal 5'-phosphate as a cofactor.

The catalysed reaction is (sulfur carrier)-H + L-cysteine = (sulfur carrier)-SH + L-alanine. In terms of biological role, catalyzes the removal of elemental sulfur atoms from cysteine to produce alanine. Seems to participate in the biosynthesis of the nitrogenase metalloclusters by providing the inorganic sulfur required for the Fe-S core formation. This is Cysteine desulfurase from Cereibacter sphaeroides (Rhodobacter sphaeroides).